The primary structure comprises 262 residues: Encapsulin nanocompartment protein Rv1762c (262 aa).

It belongs to the UPF0145 family.

The protein resides in the encapsulin nanocompartment. Functionally, cargo protein of a type 1 encapsulin nanocompartment possibly involved in protection against oxidative stress. This Mycobacterium tuberculosis (strain ATCC 25618 / H37Rv) protein is Encapsulin nanocompartment protein Rv1762c.